Here is a 181-residue protein sequence, read N- to C-terminus: Adenine phosphoribosyltransferase (181 aa).

This sequence belongs to the purine/pyrimidine phosphoribosyltransferase family. Homodimer.

It localises to the cytoplasm. The enzyme catalyses AMP + diphosphate = 5-phospho-alpha-D-ribose 1-diphosphate + adenine. It functions in the pathway purine metabolism; AMP biosynthesis via salvage pathway; AMP from adenine: step 1/1. Catalyzes a salvage reaction resulting in the formation of AMP, that is energically less costly than de novo synthesis. This chain is Adenine phosphoribosyltransferase (Aprt), found in Drosophila pseudoobscura pseudoobscura (Fruit fly).